Reading from the N-terminus, the 303-residue chain is D-alanyl-D-alanine carboxypeptidase (303 aa).

Residues 7–23 traverse the membrane as a helical segment; that stretch reads LLLLLFLIYLGYDYVNE. A disordered region spans residues 37-56; it reads DQNPKEHLENSGTSENTQEK. Residues 154 to 156 and serine 161 contribute to the substrate site; that span reads YAL. Residues histidine 163 and aspartate 170 each coordinate Zn(2+). The active-site Proton donor/acceptor is the glutamate 213. Histidine 216 contacts Zn(2+).

It belongs to the peptidase M15B family. Zn(2+) serves as cofactor.

The protein localises to the cell membrane. The DD-carboxypeptidase activity is not inhibited by beta-lactam antibiotics. Its function is as follows. Cleaves the C-terminal D-alanine residue of UDP-muramyl-pentapeptide (UDP-MurNAc-L-Ala-D-Glu-mDAP-D-Ala-D-Ala) or diacetyl-L-Lys-D-Ala-D-Ala. However the physiological substrate likely contains L-Lys instead of mDAP at the third position of the pentapeptide. Also releases the C-terminal D-lactate from UDP-MurNAc-L-Ala-D-Glu-mDAP-D-Ala-D-lactate, a depsipeptide produced by the vancomycin resistance protein VanA. Therefore, VanY should contribute in vivo to the hydrolysis of both the D-alanyl-D-alanine- and the depsipeptide-containing peptidoglycan precursors. Is not necessary for vancomycin resistance of E.faecium BM4147 and perhaps not W14-9. Does not display transpeptidase or beta-lactamase activities. This is D-alanyl-D-alanine carboxypeptidase from Enterococcus faecium (Streptococcus faecium).